The sequence spans 421 residues: Probable N-acetylgalactosaminyltransferase 8 (421 aa).

Topologically, residues 1 to 3 (MRR) are cytoplasmic. The chain crosses the membrane as a helical; Signal-anchor for type II membrane protein span at residues 4–24 (HVVLSIFVFAGIVFAAEEAEK). Residues 25–421 (LPKCEHVDPY…ELEPKVHDEL (397 aa)) are Lumenal-facing. 2 N-linked (GlcNAc...) asparagine glycosylation sites follow: Asn-52 and Asn-58. Cystine bridges form between Cys-98–Cys-331 and Cys-322–Cys-399. The tract at residues 106-219 (SYSTSVVVIH…ERWLEPLLQP (114 aa)) is catalytic subdomain A. 2 residues coordinate substrate: Asp-147 and Arg-180. Asp-203 lines the Mn(2+) pocket. Position 204 (Ser-204) interacts with substrate. Mn(2+) is bound at residue His-205. The interval 277-339 (PFNSPAMPGG…PCSRVGHVFR (63 aa)) is catalytic subdomain B. Trp-308 serves as a coordination point for substrate. His-336 contacts Mn(2+). 2 residues coordinate substrate: Arg-339 and Tyr-344. A Prevents secretion from ER motif is present at residues 418–421 (HDEL).

Belongs to the glycosyltransferase 2 family. GalNAc-T subfamily. It depends on Mn(2+) as a cofactor.

The protein localises to the golgi apparatus membrane. It functions in the pathway protein modification; protein glycosylation. Potential glycopeptide transferase involved in O-linked oligosaccharide biosynthesis. In contrast to other members of the family, it does not act as a peptide transferase that transfers GalNAc onto serine or threonine residue on peptides that have been tested. Some peptide transferase activity is however not excluded, considering that its appropriate peptide substrate may remain unidentified. The protein is Probable N-acetylgalactosaminyltransferase 8 (gly-8) of Caenorhabditis elegans.